A 118-amino-acid chain; its full sequence is Fluoride-specific ion channel FluC 1 (118 aa).

2 consecutive transmembrane segments (helical) span residues 1–21 (MIQC…RGFV) and 29–49 (FNTS…FCIG). The Na(+) site is built by glycine 71 and threonine 74. A helical membrane pass occupies residues 95 to 115 (LFILYSILQYGVSFVACLLGY).

The protein belongs to the fluoride channel Fluc/FEX (TC 1.A.43) family.

It is found in the cell membrane. The catalysed reaction is fluoride(in) = fluoride(out). With respect to regulation, na(+) is not transported, but it plays an essential structural role and its presence is essential for fluoride channel function. Fluoride-specific ion channel. Important for reducing fluoride concentration in the cell, thus reducing its toxicity. This Staphylococcus saprophyticus subsp. saprophyticus (strain ATCC 15305 / DSM 20229 / NCIMB 8711 / NCTC 7292 / S-41) protein is Fluoride-specific ion channel FluC 1.